Consider the following 404-residue polypeptide: Voltage-gated potassium channel subunit beta-3 (404 aa).

The span at 1–14 (MQVSIACTEQNLRS) shows a compositional bias: polar residues. Residues 1–77 (MQVSIACTEQ…LRESTGRGTG (77 aa)) form a disordered region. The segment covering 28–50 (PGGGNGGPAGGGHGNPPGGGGSG) has biased composition (gly residues). Positions 97, 98, 104, and 126 each coordinate NADP(+). Tyr131 acts as the Proton donor/acceptor in catalysis. Residues Asn199, Ser229, Arg230, Gln255, Trp284, Pro286, Leu287, Ala288, Cys289, Lys295, Arg305, Gly364, Ser366, Gln370, and Glu373 each coordinate NADP(+).

This sequence belongs to the shaker potassium channel beta subunit family. Forms heteromultimeric complex with alpha subunits. Interacts with KCNA5 and KCNB2. Brain specific. Most prominent expression in cerebellum. Weaker signals detected in cortex, occipital lobe, frontal lobe and temporal lobe. Not detected in spinal cord, heart, lung, liver, kidney, pancreas, placenta and skeletal muscle.

Its subcellular location is the cytoplasm. Regulatory subunit of the voltage-gated potassium (Kv) channels composed of pore-forming and potassium-conducting alpha subunits and of regulatory beta subunit. The beta-3/KCNAB3 subunit may mediate closure of potassium channels. Increases inactivation of Kv1.5/KCNA5 alpha subunit-containing channels. May display nicotinamide adenine dinucleotide phosphate (NADPH)-dependent aldoketoreductase activity. The binding of oxidized and reduced NADP(H) cofactors may be required for the regulation of potassium channel activity. This is Voltage-gated potassium channel subunit beta-3 from Homo sapiens (Human).